The chain runs to 517 residues: Sphingolipid C9-methyltransferase A (517 aa).

2 consecutive transmembrane segments (helical) span residues 58-78 (LLILLLVVIPWYTARQIGGGL) and 80-100 (TTIFFAIFTTIPILMAFWSIA). S-adenosyl-L-methionine contacts are provided by residues 223 to 224 (YT), 286 to 291 (TLGRNQ), and 316 to 317 (YR). Residue Asn290 is glycosylated (N-linked (GlcNAc...) asparagine). Residue Asn478 is glycosylated (N-linked (GlcNAc...) asparagine).

Belongs to the CFA/CMAS family.

It localises to the membrane. The enzyme catalyses a (4E,8E)-4-sphinga-4,8-dienine ceramide + S-adenosyl-L-methionine = a 9-methyl-(4E,8E)-sphinga-4,8-dienine ceramide + S-adenosyl-L-homocysteine + H(+). It participates in lipid metabolism; sphingolipid metabolism. Functionally, catalyzes methylation of the sphingoid base component of glucosylceramides (GluCers) at the C9-position. Sphingolipid C9-methylation requires 4,8-desaturated ceramides as substrates. Glucosylceramides play important roles in growth, differentiation and pathogenicity. The methyl group at the C9-position distinguishes fungal glucosylceramides from those of plants and animals and may thus play a role in host-pathogen interactions enabling the host to recognize the fungal attack and initiate specific defense responses. In Emericella nidulans (strain FGSC A4 / ATCC 38163 / CBS 112.46 / NRRL 194 / M139) (Aspergillus nidulans), this protein is Sphingolipid C9-methyltransferase A.